Reading from the N-terminus, the 228-residue chain is Octanoyltransferase (228 aa).

A BPL/LPL catalytic domain is found at N30–P213. Substrate-binding positions include R75–H82, A143–G145, and G156–A158. C174 acts as the Acyl-thioester intermediate in catalysis.

This sequence belongs to the LipB family.

The protein localises to the cytoplasm. It catalyses the reaction octanoyl-[ACP] + L-lysyl-[protein] = N(6)-octanoyl-L-lysyl-[protein] + holo-[ACP] + H(+). It participates in protein modification; protein lipoylation via endogenous pathway; protein N(6)-(lipoyl)lysine from octanoyl-[acyl-carrier-protein]: step 1/2. Catalyzes the transfer of endogenously produced octanoic acid from octanoyl-acyl-carrier-protein onto the lipoyl domains of lipoate-dependent enzymes. Lipoyl-ACP can also act as a substrate although octanoyl-ACP is likely to be the physiological substrate. This chain is Octanoyltransferase, found in Desulforamulus reducens (strain ATCC BAA-1160 / DSM 100696 / MI-1) (Desulfotomaculum reducens).